The chain runs to 139 residues: Putative nickel-responsive regulator (139 aa).

Residues His-79, His-90, His-92, and Cys-98 each contribute to the Ni(2+) site.

The protein belongs to the transcriptional regulatory CopG/NikR family. It depends on Ni(2+) as a cofactor.

Transcriptional regulator. This chain is Putative nickel-responsive regulator, found in Anaeromyxobacter dehalogenans (strain 2CP-1 / ATCC BAA-258).